A 977-amino-acid polypeptide reads, in one-letter code: 2-oxoglutarate dehydrogenase E1 component (977 aa).

The RPE1 insert domain maps to 77-125 (VLNNRHLAKPAYREEFKGDTERSTAAYIDIREDASTGSTSKLPLEAKFG).

The protein belongs to the alpha-ketoglutarate dehydrogenase family. As to quaternary structure, homodimer. Part of the 2-oxoglutarate dehydrogenase (OGDH) complex composed of E1 (2-oxoglutarate dehydrogenase), E2 (dihydrolipoamide succinyltransferase) and E3 (dihydrolipoamide dehydrogenase); the complex contains multiple copies of the three enzymatic components (E1, E2 and E3). Thiamine diphosphate serves as cofactor.

The catalysed reaction is N(6)-[(R)-lipoyl]-L-lysyl-[protein] + 2-oxoglutarate + H(+) = N(6)-[(R)-S(8)-succinyldihydrolipoyl]-L-lysyl-[protein] + CO2. Its function is as follows. E1 component of the 2-oxoglutarate dehydrogenase (OGDH) complex which catalyzes the decarboxylation of 2-oxoglutarate, the first step in the conversion of 2-oxoglutarate to succinyl-CoA and CO(2). This Rickettsia felis (strain ATCC VR-1525 / URRWXCal2) (Rickettsia azadi) protein is 2-oxoglutarate dehydrogenase E1 component (sucA).